The primary structure comprises 595 residues: Elongation factor 4 (595 aa).

A tr-type G domain is found at 1–183; it reads MNVRNFSIIA…AIVERIPPPP (183 aa). Residues 13 to 18 and 130 to 133 contribute to the GTP site; these read DHGKST and NKID.

This sequence belongs to the TRAFAC class translation factor GTPase superfamily. Classic translation factor GTPase family. LepA subfamily.

The protein localises to the cell membrane. It catalyses the reaction GTP + H2O = GDP + phosphate + H(+). Functionally, required for accurate and efficient protein synthesis under certain stress conditions. May act as a fidelity factor of the translation reaction, by catalyzing a one-codon backward translocation of tRNAs on improperly translocated ribosomes. Back-translocation proceeds from a post-translocation (POST) complex to a pre-translocation (PRE) complex, thus giving elongation factor G a second chance to translocate the tRNAs correctly. Binds to ribosomes in a GTP-dependent manner. The sequence is that of Elongation factor 4 from Deinococcus geothermalis (strain DSM 11300 / CIP 105573 / AG-3a).